A 428-amino-acid chain; its full sequence is Ammonium transporter AmtB (428 aa).

The signal sequence occupies residues 1–22 (MKIATIKTGLASLAMLPGLVMA). Residues 23–32 (APAVADKADN) are Periplasmic-facing. Residues 33 to 54 (AFMMICTALVLFMTIPGIALFY) traverse the membrane as a helical segment. Topologically, residues 55–65 (GGLIRGKNVLS) are cytoplasmic. A helical membrane pass occupies residues 66–90 (MLTQVTVTFALVCILWVVYGYSLAF). Over 91-119 (GEGNNFFGNINWLMLKNIELTAVMGSIYQ) the chain is Periplasmic. The helical transmembrane segment at 120 to 142 (YIHVAFQGSFACITVGLIVGALA) threads the bilayer. The Cytoplasmic portion of the chain corresponds to 143 to 146 (ERIR). A helical membrane pass occupies residues 147–171 (FSAVLIFVVVWLTLSYIPIAHMVWG). Residues 172-185 (GGLLASHGALDFAG) are Periplasmic-facing. The helical transmembrane segment at 186-201 (GTVVHINAAIAGLVGA) threads the bilayer. Topologically, residues 202–221 (YLIGKRVGFGKEAFKPHNLP) are cytoplasmic. The helical transmembrane segment at 222-241 (MVFTGTAILYIGWFGFNAGS) threads the bilayer. An NH4(+)-binding site is contributed by Ser-241. The Periplasmic segment spans residues 242–248 (AGTANEI). The chain crosses the membrane as a helical span at residues 249–273 (AALAFVNTVVATAAAILGWIFGEWA). Over 274-279 (LRGKPS) the chain is Cytoplasmic. Residues 280–300 (LLGACSGAIAGLVGVTPACGY) traverse the membrane as a helical segment. Over 301-302 (IG) the chain is Periplasmic. A helical membrane pass occupies residues 303–321 (VGGALIIGVVAGLAGLWGV). The Cytoplasmic segment spans residues 322 to 333 (TMLKRLLRVDDP). The chain crosses the membrane as a helical span at residues 334-355 (CDVFGVHGVCGIVGCIMTGIFA). The Periplasmic segment spans residues 356–370 (ASSLGGVGFAEGVTM). A helical membrane pass occupies residues 371–399 (GHQLLVQLESIAITIVWSGVVAFIGYKLA). Residues 400 to 428 (DLTVGLRVPEEQEREGLDVNSHGENAYNA) lie on the Cytoplasmic side of the membrane.

Belongs to the ammonia transporter channel (TC 1.A.11.2) family. In terms of assembly, homotrimer. In response to elevation of the extracellular ammonium concentration, interacts and forms a complex with GlnK.

Its subcellular location is the cell inner membrane. Its activity is regulated as follows. In the presence of high extracellular ammonium concentrations, transport activity is inhibited by interaction with the regulatory protein GlnK. Formation of the GlnK-AmtB complex is influenced by intracellular pools of the effector molecules ATP, ADP, Mg(2+) and 2-oxoglutarate. The GlnK-AmtB interaction is also controlled by the level of intracellular glutamine and the uridylylation status of GlnK. In terms of biological role, involved in the uptake of ammonium/ammonia (NH(4)(+)/NH(3)). Transport is electrogenic. Following sequestration of NH(4)(+) at the periplasmic face, NH(4)(+) is deprotonated and neutral NH(3) is transported into the cytoplasm. Neutral NH(3) and charged H(+) are carried separately across the membrane on a unique two-lane pathway, before recombining to NH(4)(+) inside the cell. The chain is Ammonium transporter AmtB (amtB) from Escherichia coli O157:H7.